Here is a 174-residue protein sequence, read N- to C-terminus: NADH-ubiquinone oxidoreductase chain 6 (174 aa).

Transmembrane regions (helical) follow at residues methionine 1 to serine 21, serine 24 to leucine 44, glycine 47 to phenylalanine 67, valine 86 to alanine 106, and tryptophan 151 to alanine 171.

This sequence belongs to the complex I subunit 6 family. In terms of assembly, core subunit of respiratory chain NADH dehydrogenase (Complex I) which is composed of 45 different subunits.

It localises to the mitochondrion inner membrane. It carries out the reaction a ubiquinone + NADH + 5 H(+)(in) = a ubiquinol + NAD(+) + 4 H(+)(out). In terms of biological role, core subunit of the mitochondrial membrane respiratory chain NADH dehydrogenase (Complex I) which catalyzes electron transfer from NADH through the respiratory chain, using ubiquinone as an electron acceptor. Essential for the catalytic activity and assembly of complex I. In Hylobates lar (Lar gibbon), this protein is NADH-ubiquinone oxidoreductase chain 6 (MT-ND6).